A 234-amino-acid chain; its full sequence is Pepsin inhibitor Dit33 (234 aa).

A signal peptide spans 1-17 (MKILFCFVLLAIAALRA). A disulfide bond links cysteine 135 and cysteine 230. Positions 200 to 222 (RHETSSQPSDATTISTTTQAPVE) are disordered. The segment covering 204–219 (SSQPSDATTISTTTQA) has biased composition (polar residues).

It belongs to the protease inhibitor I33 family.

The protein localises to the secreted. Aspartyl protease inhibitor. The sequence is that of Pepsin inhibitor Dit33 (DIT33) from Dirofilaria immitis (Canine heartworm).